The chain runs to 125 residues: Cu-Zn superoxide dismutase-like protein (125 aa).

An intrachain disulfide couples cysteine 52 to cysteine 102.

It belongs to the Cu-Zn superoxide dismutase family.

The protein resides in the host cytoplasm. Functionally, virion protein with no enzymatic activity. The chain is Cu-Zn superoxide dismutase-like protein from Mus musculus (Mouse).